Here is a 658-residue protein sequence, read N- to C-terminus: Secretin XcpQ (658 aa).

An N-terminal signal peptide occupies residues 1 to 34; that stretch reads MSQPLLRALFAPSSRSYVPAVLLSLALGIQAAHA. The tract at residues 51-141 is N0; it reads AHWTINLKDA…TEAGGGQSAP (91 aa). Positions 142-205 are N1; it reads DRLETRVIQV…DVIRQLDQKG (64 aa). Residues 206 to 279 are N2; that stretch reads SHDYSVINLR…SLDTPTARSA (74 aa). The interval 280-365 is N3; that stretch reads NTRVIRLRHN…VPRAQVLVEA (86 aa). The segment at 302-322 is disordered; it reads SEGMKNNGGQGGEQTGGGRPS. The segment covering 307-320 has biased composition (gly residues); that stretch reads NNGGQGGEQTGGGR. The tract at residues 368–606 is secretin; that stretch reads VEISGDIQDA…VFLRPTVVRD (239 aa). Residues 608–658 form a s domain region; the sequence is AGLAALSGKKYSDIRVIDGTRGPEGRPSILPTNANQLFDGQAVDLRELMTE.

The protein belongs to the bacterial secretin family. GSP D subfamily. In terms of assembly, forms a cylindrical channel with 15 subunits. The closed pentadecameric channel is 170 Angstroms long and 140 Angstroms in diameter.

It is found in the cell outer membrane. Its function is as follows. Involved in a type II secretion system (T2SS, formerly general secretion pathway, GSP) for the export of proteins. This subunit forms the outer membrane channel. Among its substrates are PrpL, elastase LasB, chitin binding protein D (CbpD), aminopeptidase PaAP, and metalloprotease ImpA. This is Secretin XcpQ from Pseudomonas aeruginosa (strain ATCC 15692 / DSM 22644 / CIP 104116 / JCM 14847 / LMG 12228 / 1C / PRS 101 / PAO1).